The sequence spans 146 residues: Cytochrome c-type biogenesis protein CcmE (146 aa).

Over 1-8 (MNPRRKKR) the chain is Cytoplasmic. Residues 9–29 (LGLILALVLGASATVGLMLYA) traverse the membrane as a helical; Signal-anchor for type II membrane protein segment. The Periplasmic portion of the chain corresponds to 30–146 (LNQNMDLFYT…EVAEAMKKTH (117 aa)). Heme-binding residues include His129 and Tyr133.

The protein belongs to the CcmE/CycJ family.

It is found in the cell inner membrane. In terms of biological role, heme chaperone required for the biogenesis of c-type cytochromes. Transiently binds heme delivered by CcmC and transfers the heme to apo-cytochromes in a process facilitated by CcmF and CcmH. The polypeptide is Cytochrome c-type biogenesis protein CcmE (Aliivibrio salmonicida (strain LFI1238) (Vibrio salmonicida (strain LFI1238))).